We begin with the raw amino-acid sequence, 242 residues long: Biosynthetic peptidoglycan transglycosylase (242 aa).

A helical membrane pass occupies residues 19-39 (ILVVLAVFWGGGIALFSVVPV).

This sequence belongs to the glycosyltransferase 51 family.

The protein resides in the cell inner membrane. It catalyses the reaction [GlcNAc-(1-&gt;4)-Mur2Ac(oyl-L-Ala-gamma-D-Glu-L-Lys-D-Ala-D-Ala)](n)-di-trans,octa-cis-undecaprenyl diphosphate + beta-D-GlcNAc-(1-&gt;4)-Mur2Ac(oyl-L-Ala-gamma-D-Glu-L-Lys-D-Ala-D-Ala)-di-trans,octa-cis-undecaprenyl diphosphate = [GlcNAc-(1-&gt;4)-Mur2Ac(oyl-L-Ala-gamma-D-Glu-L-Lys-D-Ala-D-Ala)](n+1)-di-trans,octa-cis-undecaprenyl diphosphate + di-trans,octa-cis-undecaprenyl diphosphate + H(+). The protein operates within cell wall biogenesis; peptidoglycan biosynthesis. In terms of biological role, peptidoglycan polymerase that catalyzes glycan chain elongation from lipid-linked precursors. This is Biosynthetic peptidoglycan transglycosylase from Citrobacter koseri (strain ATCC BAA-895 / CDC 4225-83 / SGSC4696).